The following is a 90-amino-acid chain: Mu-theraphotoxin-Phlo1b (90 aa).

The N-terminal stretch at 1–22 is a signal peptide; the sequence is MKVSVLITLAVLGVMFVWTSAA. Positions 23–50 are excised as a propeptide; it reads EQEDHGSDRRDSPALLKSLGRVFQSEER. 3 cysteine pairs are disulfide-bonded: cysteine 52-cysteine 66, cysteine 59-cysteine 71, and cysteine 65-cysteine 79. Phenylalanine 85 carries the phenylalanine amide modification. Positions 86–90 are excised as a propeptide; it reads GNEKS.

It belongs to the neurotoxin 10 (Hwtx-1) family. 39 (Jztx-34) subfamily. In terms of tissue distribution, expressed by the venom gland.

The protein resides in the secreted. Gating-modifier toxin that inhibits voltage-gated sodium channel Nav by shifting the threshold for channel activation to more positive potentials. This toxin moderately inhibits human Nav1.7/SCN9A (IC(50)=360 nM) and weakly inhibits hNav1.2/SCN2A (37% inhibition at 1 uM peptide) and hNav1.5/SCN5A (&lt;20% inhibition at 1 uM peptide). Inhibition of Nav1.7 is voltage-dependent, with lower inhibition at more positive test pulses. This chain is Mu-theraphotoxin-Phlo1b, found in Phlogius sp. (Tarantula spider).